Reading from the N-terminus, the 231-residue chain is NADH-ubiquinone oxidoreductase chain 4 (231 aa).

7 helical membrane-spanning segments follow: residues 1–21 (PIAG…YGII), 34–54 (VFLP…LTCL), 61–80 (SLIA…AIII), 84–106 (WGLS…LFCL), 128–148 (ILPM…ATPP), 156–176 (LLII…LGLS), and 211–231 (LLMI…ELVI).

This sequence belongs to the complex I subunit 4 family.

The protein resides in the mitochondrion membrane. The enzyme catalyses a ubiquinone + NADH + 5 H(+)(in) = a ubiquinol + NAD(+) + 4 H(+)(out). In terms of biological role, core subunit of the mitochondrial membrane respiratory chain NADH dehydrogenase (Complex I) that is believed to belong to the minimal assembly required for catalysis. Complex I functions in the transfer of electrons from NADH to the respiratory chain. The immediate electron acceptor for the enzyme is believed to be ubiquinone. This Tropidolaemus wagleri (Wagler's pit viper) protein is NADH-ubiquinone oxidoreductase chain 4 (MT-ND4).